Reading from the N-terminus, the 103-residue chain is Small ribosomal subunit protein uS10 (103 aa).

This sequence belongs to the universal ribosomal protein uS10 family. In terms of assembly, part of the 30S ribosomal subunit.

Functionally, involved in the binding of tRNA to the ribosomes. This chain is Small ribosomal subunit protein uS10, found in Novosphingobium aromaticivorans (strain ATCC 700278 / DSM 12444 / CCUG 56034 / CIP 105152 / NBRC 16084 / F199).